The sequence spans 453 residues: Ribosomal protein uS12 methylthiotransferase RimO (453 aa).

The 116-residue stretch at 5-120 (PKVGFVSLGC…VMQAVHSHLP (116 aa)) folds into the MTTase N-terminal domain. 6 residues coordinate [4Fe-4S] cluster: Cys14, Cys50, Cys79, Cys151, Cys155, and Cys158. Positions 137–382 (LTPRHYAYLK…MEVAEEVSAN (246 aa)) constitute a Radical SAM core domain. The TRAM domain occupies 385–453 (QRKVGKTLKV…ADGHDLWGEV (69 aa)).

This sequence belongs to the methylthiotransferase family. RimO subfamily. It depends on [4Fe-4S] cluster as a cofactor.

It is found in the cytoplasm. The catalysed reaction is L-aspartate(89)-[ribosomal protein uS12]-hydrogen + (sulfur carrier)-SH + AH2 + 2 S-adenosyl-L-methionine = 3-methylsulfanyl-L-aspartate(89)-[ribosomal protein uS12]-hydrogen + (sulfur carrier)-H + 5'-deoxyadenosine + L-methionine + A + S-adenosyl-L-homocysteine + 2 H(+). Catalyzes the methylthiolation of an aspartic acid residue of ribosomal protein uS12. This chain is Ribosomal protein uS12 methylthiotransferase RimO, found in Burkholderia lata (strain ATCC 17760 / DSM 23089 / LMG 22485 / NCIMB 9086 / R18194 / 383).